The chain runs to 365 residues: MTQTLTLLGLESSCDDTAAAVVRQTTGAKAEILSSIVFGQTELHSAYGGVVPEIAARAHAEKLDSCVRDALAEAGLTLGDLDAIAVTAGPGLIGGVMSGVMCAKGISAATGLPLIGVNHLAGHALTPRLTDDITYPYLMLLVSGGHCQYLIARGPETFSRLGGTIDDAPGEAFDKTARLLGLPQPGGPSVQAEAEHGDPERFRFPRPLLDRPDCNLSFSGLKTALMRMRDQIIAEKGGLTRQDRADLCAGFQAAIVDTLVEKTRRALRLYLEDKPQHPTLAVAGGVAANTEIRNGLMALCFELETDFLAPPLALCTDNAAMIAYAGLERYKTGARDGMSLSARPRWPLDKTSPALIGSGKKGAKA.

Residues His-119 and His-123 each coordinate Fe cation. Substrate contacts are provided by residues 141–145 (LVSGG), Asp-174, Gly-187, and Asn-289. Fe cation is bound at residue Asp-317. Residues 341-365 (SARPRWPLDKTSPALIGSGKKGAKA) are disordered.

The protein belongs to the KAE1 / TsaD family. The cofactor is Fe(2+).

The protein resides in the cytoplasm. It carries out the reaction L-threonylcarbamoyladenylate + adenosine(37) in tRNA = N(6)-L-threonylcarbamoyladenosine(37) in tRNA + AMP + H(+). In terms of biological role, required for the formation of a threonylcarbamoyl group on adenosine at position 37 (t(6)A37) in tRNAs that read codons beginning with adenine. Is involved in the transfer of the threonylcarbamoyl moiety of threonylcarbamoyl-AMP (TC-AMP) to the N6 group of A37, together with TsaE and TsaB. TsaD likely plays a direct catalytic role in this reaction. In Ruegeria sp. (strain TM1040) (Silicibacter sp.), this protein is tRNA N6-adenosine threonylcarbamoyltransferase.